Here is a 118-residue protein sequence, read N- to C-terminus: Altered inheritance of mitochondria protein 26, mitochondrial (118 aa).

The next 3 helical transmembrane spans lie at 7 to 27 (EHLL…AYFF), 41 to 61 (LAVT…SIPA), and 98 to 118 (FLFC…GLSI).

The protein resides in the mitochondrion membrane. Involved in selective mitochondria autophagy (mitophagy). In Saccharomyces cerevisiae (strain ATCC 204508 / S288c) (Baker's yeast), this protein is Altered inheritance of mitochondria protein 26, mitochondrial (AIM26).